Here is a 509-residue protein sequence, read N- to C-terminus: 2-succinyl-5-enolpyruvyl-6-hydroxy-3-cyclohexene-1-carboxylate synthase (509 aa).

This sequence belongs to the TPP enzyme family. MenD subfamily. As to quaternary structure, homodimer. The cofactor is Mg(2+). Mn(2+) is required as a cofactor. Requires thiamine diphosphate as cofactor.

It catalyses the reaction isochorismate + 2-oxoglutarate + H(+) = 5-enolpyruvoyl-6-hydroxy-2-succinyl-cyclohex-3-ene-1-carboxylate + CO2. It functions in the pathway quinol/quinone metabolism; 1,4-dihydroxy-2-naphthoate biosynthesis; 1,4-dihydroxy-2-naphthoate from chorismate: step 2/7. The protein operates within quinol/quinone metabolism; menaquinone biosynthesis. Functionally, catalyzes the thiamine diphosphate-dependent decarboxylation of 2-oxoglutarate and the subsequent addition of the resulting succinic semialdehyde-thiamine pyrophosphate anion to isochorismate to yield 2-succinyl-5-enolpyruvyl-6-hydroxy-3-cyclohexene-1-carboxylate (SEPHCHC). The chain is 2-succinyl-5-enolpyruvyl-6-hydroxy-3-cyclohexene-1-carboxylate synthase from Corynebacterium diphtheriae (strain ATCC 700971 / NCTC 13129 / Biotype gravis).